The primary structure comprises 716 residues: Forkhead box protein P2 (716 aa).

Residues 1 to 28 show a composition bias toward polar residues; that stretch reads MMQESATETISNSSMNQNGMSTLSSQLD. 2 disordered regions span residues 1–45 and 286–340; these read MMQE…SEVS and KHGG…TGAS. Over residues 293–306 the composition is skewed to low complexity; the sequence is TTNNSSSTTSSTTS. Residues 316–325 are compositionally biased toward polar residues; that stretch reads SIVNGQSSVL. Over residues 327-338 the composition is skewed to basic and acidic residues; it reads ARRDSSSHEETG. The C2H2-type zinc-finger motif lies at 347–372; the sequence is GVCKWPGCESICEDFGQFLKHLNNEH. The segment at 389-410 is leucine-zipper; sequence VQQLEIQLSKERERLQAMMTHL. A CTBP1-binding region spans residues 423 to 427; the sequence is PLNLV. A compositionally biased stretch (low complexity) spans 439 to 460; that stretch reads TSPQSLPQTPTTPTAPVTPITQ. The disordered stretch occupies residues 439 to 466; the sequence is TSPQSLPQTPTTPTAPVTPITQGPSVIT. The fork-head DNA-binding region spans 505-595; that stretch reads RPPFTYATLI…SQKITGSPTL (91 aa). Disordered regions lie at residues 650–669 and 679–716; these read LDHIDSNGNSSPGCSPQPHI and VIAEDEDCPMSLVTTANHSPELEDDREIEEEPLSEDLE. Residues 700–716 are compositionally biased toward acidic residues; sequence LEDDREIEEEPLSEDLE.

Forms homodimers and heterodimers with FOXP1 and FOXP4. Dimerization is required for DNA-binding. Interacts with CTBP1. Interacts with FOXP1. Interacts with TBR1. Interacts with ZMYM2.

The protein localises to the nucleus. Functionally, transcriptional repressor that may play a role in the specification and differentiation of lung epithelium. May also play a role in developing neural, gastrointestinal and cardiovascular tissues. Can act with CTBP1 to synergistically repress transcription but CTPBP1 is not essential. Plays a role in synapse formation by regulating SRPX2 levels. In Pan paniscus (Pygmy chimpanzee), this protein is Forkhead box protein P2 (FOXP2).